We begin with the raw amino-acid sequence, 358 residues long: Dual-specificity RNA methyltransferase RlmN (358 aa).

The Proton acceptor role is filled by glutamate 86. A Radical SAM core domain is found at 105-338; it reads RHKRYTICVS…CTIRQSKGLD (234 aa). A disulfide bond links cysteine 112 and cysteine 343. Positions 119, 123, and 126 each coordinate [4Fe-4S] cluster. S-adenosyl-L-methionine contacts are provided by residues 169–170, serine 201, 224–226, and asparagine 300; these read GE and SLH. Residue cysteine 343 is the S-methylcysteine intermediate of the active site.

It belongs to the radical SAM superfamily. RlmN family. Requires [4Fe-4S] cluster as cofactor.

Its subcellular location is the cytoplasm. It carries out the reaction adenosine(2503) in 23S rRNA + 2 reduced [2Fe-2S]-[ferredoxin] + 2 S-adenosyl-L-methionine = 2-methyladenosine(2503) in 23S rRNA + 5'-deoxyadenosine + L-methionine + 2 oxidized [2Fe-2S]-[ferredoxin] + S-adenosyl-L-homocysteine. It catalyses the reaction adenosine(37) in tRNA + 2 reduced [2Fe-2S]-[ferredoxin] + 2 S-adenosyl-L-methionine = 2-methyladenosine(37) in tRNA + 5'-deoxyadenosine + L-methionine + 2 oxidized [2Fe-2S]-[ferredoxin] + S-adenosyl-L-homocysteine. Its function is as follows. Specifically methylates position 2 of adenine 2503 in 23S rRNA and position 2 of adenine 37 in tRNAs. m2A2503 modification seems to play a crucial role in the proofreading step occurring at the peptidyl transferase center and thus would serve to optimize ribosomal fidelity. This Campylobacter hominis (strain ATCC BAA-381 / DSM 21671 / CCUG 45161 / LMG 19568 / NCTC 13146 / CH001A) protein is Dual-specificity RNA methyltransferase RlmN.